Here is an 83-residue protein sequence, read N- to C-terminus: UPF0297 protein Moth_1643 (83 aa).

This sequence belongs to the UPF0297 family.

The chain is UPF0297 protein Moth_1643 from Moorella thermoacetica (strain ATCC 39073 / JCM 9320).